The sequence spans 424 residues: D-inositol 3-phosphate glycosyltransferase (424 aa).

Histidine 9 provides a ligand contact to 1D-myo-inositol 3-phosphate. UDP-N-acetyl-alpha-D-glucosamine is bound by residues 15-16 (QP) and glycine 23. Residues 20–25 (DSGGMN), lysine 78, tyrosine 110, threonine 134, and arginine 154 each bind 1D-myo-inositol 3-phosphate. UDP-N-acetyl-alpha-D-glucosamine is bound by residues arginine 231, lysine 236, and arginine 294. Tyrosine 303, arginine 304, and alanine 306 together coordinate Mg(2+). Residues glutamate 316 and glutamate 324 each contribute to the UDP-N-acetyl-alpha-D-glucosamine site. Threonine 330 lines the Mg(2+) pocket.

It belongs to the glycosyltransferase group 1 family. MshA subfamily. Homodimer.

It catalyses the reaction 1D-myo-inositol 3-phosphate + UDP-N-acetyl-alpha-D-glucosamine = 1D-myo-inositol 2-acetamido-2-deoxy-alpha-D-glucopyranoside 3-phosphate + UDP + H(+). Catalyzes the transfer of a N-acetyl-glucosamine moiety to 1D-myo-inositol 3-phosphate to produce 1D-myo-inositol 2-acetamido-2-deoxy-glucopyranoside 3-phosphate in the mycothiol biosynthesis pathway. The polypeptide is D-inositol 3-phosphate glycosyltransferase (Corynebacterium efficiens (strain DSM 44549 / YS-314 / AJ 12310 / JCM 11189 / NBRC 100395)).